The following is a 336-amino-acid chain: Holliday junction branch migration complex subunit RuvB (336 aa).

Residues 1–184 (MYDEERIVSG…FGIVGHMEYY (184 aa)) form a large ATPase domain (RuvB-L) region. ATP-binding positions include Leu23, Arg24, Gly65, Lys68, Thr69, Thr70, 131-133 (EDY), Arg174, Tyr184, and Arg221. Thr69 contributes to the Mg(2+) binding site. A small ATPAse domain (RuvB-S) region spans residues 185–255 (NEVDLSQIIK…IVQFALDLLR (71 aa)). Residues 258–336 (KVGLDRTDRK…HLGIKYNKEG (79 aa)) form a head domain (RuvB-H) region. Arg313 and Arg318 together coordinate DNA.

The protein belongs to the RuvB family. In terms of assembly, homohexamer. Forms an RuvA(8)-RuvB(12)-Holliday junction (HJ) complex. HJ DNA is sandwiched between 2 RuvA tetramers; dsDNA enters through RuvA and exits via RuvB. An RuvB hexamer assembles on each DNA strand where it exits the tetramer. Each RuvB hexamer is contacted by two RuvA subunits (via domain III) on 2 adjacent RuvB subunits; this complex drives branch migration. In the full resolvosome a probable DNA-RuvA(4)-RuvB(12)-RuvC(2) complex forms which resolves the HJ.

The protein resides in the cytoplasm. It carries out the reaction ATP + H2O = ADP + phosphate + H(+). Its function is as follows. The RuvA-RuvB-RuvC complex processes Holliday junction (HJ) DNA during genetic recombination and DNA repair, while the RuvA-RuvB complex plays an important role in the rescue of blocked DNA replication forks via replication fork reversal (RFR). RuvA specifically binds to HJ cruciform DNA, conferring on it an open structure. The RuvB hexamer acts as an ATP-dependent pump, pulling dsDNA into and through the RuvAB complex. RuvB forms 2 homohexamers on either side of HJ DNA bound by 1 or 2 RuvA tetramers; 4 subunits per hexamer contact DNA at a time. Coordinated motions by a converter formed by DNA-disengaged RuvB subunits stimulates ATP hydrolysis and nucleotide exchange. Immobilization of the converter enables RuvB to convert the ATP-contained energy into a lever motion, pulling 2 nucleotides of DNA out of the RuvA tetramer per ATP hydrolyzed, thus driving DNA branch migration. The RuvB motors rotate together with the DNA substrate, which together with the progressing nucleotide cycle form the mechanistic basis for DNA recombination by continuous HJ branch migration. Branch migration allows RuvC to scan DNA until it finds its consensus sequence, where it cleaves and resolves cruciform DNA. This chain is Holliday junction branch migration complex subunit RuvB, found in Ligilactobacillus salivarius (strain UCC118) (Lactobacillus salivarius).